The primary structure comprises 461 residues: MKDQVKQIHFVGIGGVGMAGIAEVCLNLGFTVSGSDLKENPTVRHLISLGALIQFNHDASHVKNSDVVVVSTAIAKDNPEVCFAKESRIPVIPRAAMLAELMRMRFGIAIAGTHGKTTTTSLASAILTEGGLDPTFVIGGKLNQFDSNARLGSSQYLIAEADESDASFLHLSPMMSVVTNIDEDHMETYQGDYANLEQTFIEFIHRLPFYGVAIVCIDDQNIQNMLPKLSRKIRTYGFSESADIRATEVLHQGLSMHFNVKANDLPEFSVVLNQPGKHNVLNALAAITVALELDVSIESIQKALAGFGGVGRRFEVYPSRSIGHKNVTLVDDYGHHPTELEATLSTARMAFPEKRLVLVFQPHRYSRTRDLFDEFVQALQHADLLVLLDVYPAGEAPIAAFDSKALLQAMRLRGHKENLHVESQQQLNELTETLLLDDDVVLVMGAGDVGQLARDWKQQAY.

112–118 contacts ATP; the sequence is GTHGKTT.

The protein belongs to the MurCDEF family.

Its subcellular location is the cytoplasm. It catalyses the reaction UDP-N-acetyl-alpha-D-muramate + L-alanine + ATP = UDP-N-acetyl-alpha-D-muramoyl-L-alanine + ADP + phosphate + H(+). The protein operates within cell wall biogenesis; peptidoglycan biosynthesis. Cell wall formation. This is UDP-N-acetylmuramate--L-alanine ligase from Hydrogenovibrio crunogenus (strain DSM 25203 / XCL-2) (Thiomicrospira crunogena).